A 232-amino-acid chain; its full sequence is Response regulator MprA (232 aa).

The 115-residue stretch at Arg-4–Leu-118 folds into the Response regulatory domain. The residue at position 48 (Asp-48) is a 4-aspartylphosphate. The segment at residues Ser-131 to Glu-229 is a DNA-binding region (ompR/PhoB-type).

Phosphorylated and dephosphorylated by MprB.

It localises to the cytoplasm. Functionally, member of the two-component regulatory system MprB/MprA which contributes to maintaining a balance among several systems involved in stress resistance and is required for establishment and maintenance of persistent infection in the host. Functions as a transcriptional regulator that recognizes a 19-bp nucleotide motif comprizing two loosely conserved 8-bp direct DNA-binding motif repeats separated by a 3-bp spacer region. This is Response regulator MprA (mprA) from Mycobacterium ulcerans (strain Agy99).